A 391-amino-acid polypeptide reads, in one-letter code: MMITKQSYQRFALMRVFVFSLSAFIFNTTEFVPVALLSDIAKSFEMESATVGLMITAYAWVVSLGSLPLMLLSAKIERKRLLLFLFALFIFSHILSALAWNFWVLLLSRMGIAFAHSIFWSITASLVIRVAPRNKKQQALGLLALGSSLAMILGLPLGRIIGQILDWRSTFGVIGGVATLIMLLMWKLLPHLPSRNAGTLASVPILMKRPLLVGIYLLVIMVISGHFTTYSYIEPFIIQISQFSPDITTLMLFVFGLAGVVGSFLFGRLYAKNSRKFIAFAMVLVICPQLLLFVFKNLEWVIFLQIFLWGIGITSLTIALQMRVLQLAPDATDVASAIFSGSYNVGIGSGALFGSIVIHQLGLEYIGFVGGALGLLALFWLRFITIKFKKT.

Transmembrane regions (helical) follow at residues 16–36 (VFVF…PVAL), 51–71 (VGLM…PLML), 82–102 (LLFL…AWNF), 110–130 (MGIA…VIRV), 138–158 (QALG…LPLG), 170–190 (TFGV…KLLP), 210–230 (PLLV…FTTY), 247–267 (ITTL…FLFG), 277–297 (FIAF…VFKN), 300–320 (WVIF…TIAL), 338–358 (IFSG…SIVI), and 361–381 (LGLE…LFWL).

The protein belongs to the major facilitator superfamily. SotB (TC 2.A.1.2) family.

Its subcellular location is the cell inner membrane. Involved in the efflux of sugars. The physiological role may be the reduction of the intracellular concentration of toxic sugars or sugar metabolites. The polypeptide is Probable sugar efflux transporter (Helicobacter pylori (strain J99 / ATCC 700824) (Campylobacter pylori J99)).